We begin with the raw amino-acid sequence, 338 residues long: MTLKEALGKVVGRRDLTREEMTRIMGLMLAGEASPAQVGALATALKMKGETEDEILGAAEAMRACAAKLSPRADVVLDTCGTGGDGAHTFNISTAVAFVAAGAGVTVAKHGNRAVSSRCGSADVLAALGVSMERPHERVARDIDEHGVGFLFAPSHHGALRHVAQARRDMGFHSVFNLLGPLTNPAGARYQLLGTFDGKRVEQTARVLGRLGSRRAWVVHGHDGLDEISPCSATQVAELREDGTVHTFTVSPQDAGLDVVPREAIAGGDAEENAQRLRALLDGERSGLRTAVLLNAAAALVVVGLAADLRDGVRKAEQAIDSGAARNKLSALIEGGLS.

5-phospho-alpha-D-ribose 1-diphosphate is bound by residues G81, 84 to 85 (GD), T89, 91 to 94 (NIST), 109 to 117 (KHGNRAVSS), and S121. G81 contacts anthranilate. S93 contributes to the Mg(2+) binding site. N112 is an anthranilate binding site. Residue R167 participates in anthranilate binding. Mg(2+) is bound by residues D226 and E227.

It belongs to the anthranilate phosphoribosyltransferase family. Homodimer. Mg(2+) is required as a cofactor.

The enzyme catalyses N-(5-phospho-beta-D-ribosyl)anthranilate + diphosphate = 5-phospho-alpha-D-ribose 1-diphosphate + anthranilate. Its pathway is amino-acid biosynthesis; L-tryptophan biosynthesis; L-tryptophan from chorismate: step 2/5. Its function is as follows. Catalyzes the transfer of the phosphoribosyl group of 5-phosphorylribose-1-pyrophosphate (PRPP) to anthranilate to yield N-(5'-phosphoribosyl)-anthranilate (PRA). This chain is Anthranilate phosphoribosyltransferase, found in Myxococcus xanthus (strain DK1622).